The following is a 90-amino-acid chain: UPF0329 protein ECU04_1650 (90 aa).

Belongs to the UPF0329 family.

The protein is UPF0329 protein ECU04_1650 of Encephalitozoon cuniculi (strain GB-M1) (Microsporidian parasite).